Reading from the N-terminus, the 284-residue chain is Pantothenate synthetase (284 aa).

30–37 (MGNLHEGH) lines the ATP pocket. Residue histidine 37 is the Proton donor of the active site. Position 61 (glutamine 61) interacts with (R)-pantoate. Glutamine 61 contributes to the beta-alanine binding site. Residue 149–152 (GEKD) participates in ATP binding. Position 155 (glutamine 155) interacts with (R)-pantoate. ATP contacts are provided by residues valine 178 and 186 to 189 (LSSR).

Belongs to the pantothenate synthetase family. Homodimer.

The protein localises to the cytoplasm. The enzyme catalyses (R)-pantoate + beta-alanine + ATP = (R)-pantothenate + AMP + diphosphate + H(+). It participates in cofactor biosynthesis; (R)-pantothenate biosynthesis; (R)-pantothenate from (R)-pantoate and beta-alanine: step 1/1. In terms of biological role, catalyzes the condensation of pantoate with beta-alanine in an ATP-dependent reaction via a pantoyl-adenylate intermediate. In Sodalis glossinidius (strain morsitans), this protein is Pantothenate synthetase.